A 416-amino-acid polypeptide reads, in one-letter code: Squamosa promoter-binding-like protein 8 (416 aa).

The interval 11 to 51 (SSCDDFGYNATPPPPPSLLPIMDQDGGGGSIQRDHHQHHNH) is disordered. The SBP-type zinc finger occupies 182–260 (PPRCQAEGCK…ADHNRRRRKS (79 aa)). Positions 185, 190, 207, 210, 227, 230, 234, and 246 each coordinate Zn(2+). The Bipartite nuclear localization signal motif lies at 243–259 (KKSCRKRLADHNRRRRK). Residues 250–299 (LADHNRRRRKSKPSDGEHSGEKRRAQANKSAATKDKAGSSSKNAGIGDGF) form a disordered region. The span at 261–273 (KPSDGEHSGEKRR) shows a compositional bias: basic and acidic residues.

Expressed in stems, leaf sheaths, and young panicles. Weakly expressed in ligules, auricles, and leaf sheaths at the basal region.

Its subcellular location is the nucleus. Probable transcription factor that plays an important role in building the laminar joint between leaf blade and leaf sheath boundary, thereby controlling ligule and auricle development. This chain is Squamosa promoter-binding-like protein 8 (SPL8), found in Oryza sativa subsp. japonica (Rice).